The primary structure comprises 141 residues: Hemoglobin subunit alpha (141 aa).

The 141-residue stretch at 1–141 (VLSPADKSNV…VSTVLTSKYR (141 aa)) folds into the Globin domain. A Phosphoserine modification is found at Ser3. Lys7 and Lys11 each carry N6-succinyllysine. N6-acetyllysine; alternate is present on Lys16. Lys16 is subject to N6-succinyllysine; alternate. A Phosphotyrosine modification is found at Tyr24. A Phosphoserine modification is found at Ser35. Position 40 is an N6-succinyllysine (Lys40). The residue at position 49 (Ser49) is a Phosphoserine. His58 is a binding site for O2. His87 is a heme b binding site. Ser102 is modified (phosphoserine). Thr108 bears the Phosphothreonine mark. Phosphoserine is present on residues Ser124 and Ser131. 2 positions are modified to phosphothreonine: Thr134 and Thr137. Residue Ser138 is modified to Phosphoserine.

It belongs to the globin family. In terms of assembly, heterotetramer of two alpha chains and two beta chains. In terms of tissue distribution, red blood cells.

Functionally, involved in oxygen transport from the lung to the various peripheral tissues. In terms of biological role, hemopressin acts as an antagonist peptide of the cannabinoid receptor CNR1. Hemopressin-binding efficiently blocks cannabinoid receptor CNR1 and subsequent signaling. This chain is Hemoglobin subunit alpha (HBA), found in Mico argentatus (Silvery marmoset).